Here is a 455-residue protein sequence, read N- to C-terminus: Ammonium transporter Rh type B (455 aa).

The Cytoplasmic segment spans residues 1-10 (MARVPRHRRL). Residues 11–31 (VLPLLCLLFQGATALLFAIFV) form a helical membrane-spanning segment. Residues 32–58 (RYNHETDAALWHWGNHSNVDNEFYFRY) are Extracellular-facing. A glycan (N-linked (GlcNAc...) asparagine) is linked at Asn-46. Residues 59–79 (PSFQDVHVMVFVGFGFLMVFL) traverse the membrane as a helical segment. At 80-83 (QRYG) the chain is on the cytoplasmic side. A helical transmembrane segment spans residues 84 to 104 (FSSVGFTFLVASLTLQWATLL). Residues 105–121 (QGFLHSFHGGHIHVGVE) lie on the Extracellular side of the membrane. The helical transmembrane segment at 122–142 (SLINADFCAGAVLISFGAVLG) threads the bilayer. The Cytoplasmic portion of the chain corresponds to 143–146 (KTGP). The helical transmembrane segment at 147–167 (AQLLLMALLEAVLFSVNEFIL) threads the bilayer. Topologically, residues 168–175 (LSLLGVRD) are extracellular. Residues 176–198 (AGGSMTIHTFGAYFGLFLSWVLY) form a helical membrane-spanning segment. The Cytoplasmic portion of the chain corresponds to 199–216 (RSQLEKSRHRQSSVYNSD). A helical membrane pass occupies residues 217–237 (LFAMIGTIFLWVFWPSFNSAP). The Extracellular portion of the chain corresponds to 238–248 (TALGDGQHRTV). A helical transmembrane segment spans residues 249–269 (VNTYYSLTASTLSTFALSALV). The Cytoplasmic segment spans residues 270 to 279 (SGDGRLDMVH). A helical membrane pass occupies residues 280-300 (VQNAALAGGVVVGTSSEMMLT). Position 301 (Pro-301) is a topological domain, extracellular. The helical transmembrane segment at 302-322 (FGALAAGFLAGTVSTLGYKFF) threads the bilayer. The Cytoplasmic segment spans residues 323–343 (TPILESRFKLQDTCGVHNLHG). The helical transmembrane segment at 344–364 (MPGVLGAILGVVVAALATHEA) threads the bilayer. Residues 365–390 (YGDGLQSVFPLIAKGQRSATSQAVYQ) are Extracellular-facing. A helical membrane pass occupies residues 391-411 (LFGMFVTLVFASVGGSLGGLL). The Cytoplasmic segment spans residues 412 to 455 (LRLPFLDSPPDSQCFEDQVYWEVPGEQETETQRPLRGGESDTRA). An interaction with ANK3 region spans residues 413–421 (RLPFLDSPP). The disordered stretch occupies residues 434-455 (VPGEQETETQRPLRGGESDTRA). Residues 441-455 (ETQRPLRGGESDTRA) show a composition bias toward basic and acidic residues.

Belongs to the ammonium transporter (TC 2.A.49) family. Rh subfamily. As to quaternary structure, interacts (via C-terminus) with ANK2 and ANK3; required for targeting to the basolateral membrane. N-glycosylated. In terms of tissue distribution, expressed in kidney by connecting segments and collecting tubules. Also expressed in liver by perivenous hepatocytes. Expressed in the forestomach and the fundus of the stomach. Expressed in duodenum, jejunum, ileum and colon at the level of villous (at protein level). Specifically expressed in kidney where it is restricted to the epithelial linings of the convoluted tubules and the loop of Henle. Also detected in ovary. Expressed by hepatocytes and dermal hair follicles and papillae.

Its subcellular location is the cell membrane. The protein resides in the basolateral cell membrane. The catalysed reaction is NH4(+)(in) = NH4(+)(out). It catalyses the reaction methylamine(out) = methylamine(in). The enzyme catalyses CO2(out) = CO2(in). With respect to regulation, inhibited by amiloride. Its function is as follows. Ammonium transporter involved in the maintenance of acid-base homeostasis. Transports ammonium and its related derivative methylammonium across the basolateral plasma membrane of epithelial cells likely contributing to renal transepithelial ammonia transport and ammonia metabolism. May transport either NH4(+) or NH3 ammonia species predominantly mediating an electrogenic NH4(+) transport. May act as a CO2 channel providing for renal acid secretion. This is Ammonium transporter Rh type B (Rhbg) from Mus musculus (Mouse).